Reading from the N-terminus, the 95-residue chain is Integration host factor subunit beta (95 aa).

Residues 59 to 95 (RVGRNPKTGQSVRLDGKFVPHFKPGKELRDRVNEDES) form a disordered region. The span at 72–95 (LDGKFVPHFKPGKELRDRVNEDES) shows a compositional bias: basic and acidic residues.

The protein belongs to the bacterial histone-like protein family. Heterodimer of an alpha and a beta chain.

This protein is one of the two subunits of integration host factor, a specific DNA-binding protein that functions in genetic recombination as well as in transcriptional and translational control. The chain is Integration host factor subunit beta from Ectopseudomonas mendocina (strain ymp) (Pseudomonas mendocina).